Reading from the N-terminus, the 431-residue chain is Trigger factor (431 aa).

In terms of domain architecture, PPIase FKBP-type spans 160-245 (DDRVTIDFVG…VKKVEVMVLP (86 aa)).

Belongs to the FKBP-type PPIase family. Tig subfamily.

The protein localises to the cytoplasm. The catalysed reaction is [protein]-peptidylproline (omega=180) = [protein]-peptidylproline (omega=0). Its function is as follows. Involved in protein export. Acts as a chaperone by maintaining the newly synthesized protein in an open conformation. Functions as a peptidyl-prolyl cis-trans isomerase. In Mannheimia succiniciproducens (strain KCTC 0769BP / MBEL55E), this protein is Trigger factor.